Consider the following 145-residue polypeptide: Neutral phospholipase A2 homolog taipoxin beta chain 1 (145 aa).

The N-terminal stretch at 1 to 27 (MHPAHLLVLLAVCVSLLGASDIPPLPL) is a signal peptide. 7 disulfides stabilise this stretch: Cys-38–Cys-98, Cys-54–Cys-144, Cys-56–Cys-72, Cys-71–Cys-125, Cys-78–Cys-118, Cys-87–Cys-111, and Cys-105–Cys-116.

It belongs to the phospholipase A2 family. Group I subfamily. D49 sub-subfamily. In terms of assembly, heterotrimer of alpha, beta, and gamma chains; non-covalently linked. As to expression, expressed by the venom gland.

It is found in the secreted. Its function is as follows. Heterotrimer: Snake venom phospholipase A2 (PLA2) heterotrimer that acts as a potent presynaptic neurotoxin by blocking synaptic transmission and synaptic vesicle recycling. May act by binding in a calcium-dependent fashion to neurotonal pentraxin-1 (NPTX1) and neurotonal pentraxin-2 (NPTX2), but not to neuronal pentraxin receptor (NPTXR). Also binds to taipoxin-associated calcium binding protein 49 (RCN2), a protein localized in the lumen of endoplasmic reticulum. In terms of biological role, monomer (beta chain): Snake venom phospholipase A2 homolog that is neither toxic nor enzymatically active. Does not bind calcium. In Oxyuranus scutellatus scutellatus (Australian taipan), this protein is Neutral phospholipase A2 homolog taipoxin beta chain 1.